We begin with the raw amino-acid sequence, 285 residues long: Coagulation factor IX (285 aa).

Y23 carries the post-translational modification Sulfotyrosine. N-linked (GlcNAc...) asparagine glycosylation is present at N25. The residue at position 27 (T27) is a Phosphothreonine; alternate. An O-linked (GalNAc...) threonine; alternate glycan is attached at T27. N45 is a glycosylation site (N-linked (GlcNAc...) asparagine). An O-linked (GalNAc...) threonine glycan is attached at T47. One can recognise a Peptidase S1 domain in the interval 59-285; it reads VVGGEDAKPG…YTKVSRYVNW (227 aa). The cysteines at positions 84 and 100 are disulfide-linked. H99 functions as the Charge relay system in the catalytic mechanism. Ca(2+) is bound by residues N115, E120, and E123. N-linked (GlcNAc...) asparagine glycosylation is found at N127 and N138. D147 acts as the Charge relay system in catalysis. 2 disulfide bridges follow: C214–C228 and C239–C267. The Charge relay system role is filled by S243.

The protein belongs to the peptidase S1 family. As to quaternary structure, heterodimer of a light chain and a heavy chain; disulfide-linked. Interacts (inactive and activated) with F11 (activated) in calcium-dependent manner. Interacts with SERPINC1. In terms of processing, activated by factor XIa, which excises the activation peptide. The propeptide can also be removed by snake venom protease. Activated by coagulation factor VIIa-tissue factor (F7-F3) complex in calcium-dependent manner.

Its subcellular location is the secreted. It catalyses the reaction Selective cleavage of Arg-|-Ile bond in factor X to form factor Xa.. In terms of biological role, factor IX is a vitamin K-dependent plasma protein that participates in the intrinsic pathway of blood coagulation by converting factor X to its active form in the presence of Ca(2+) ions, phospholipids, and factor VIIIa. The chain is Coagulation factor IX (F9) from Cavia porcellus (Guinea pig).